A 554-amino-acid polypeptide reads, in one-letter code: CTP synthase (554 aa).

The tract at residues 1–265 (MTPLIFVTGG…DELVIDQFKL (265 aa)) is amidoligase domain. Ser-13 contacts CTP. Ser-13 contributes to the UTP binding site. Residues 14–19 (SLGKGI) and Asp-71 contribute to the ATP site. The Mg(2+) site is built by Asp-71 and Glu-139. CTP-binding positions include 146-148 (DIE), 186-191 (KTKPTQ), and Lys-222. Residues 186 to 191 (KTKPTQ) and Lys-222 each bind UTP. The Glutamine amidotransferase type-1 domain maps to 292-545 (NIAVVGKYVD…VRAAREKKAG (254 aa)). Position 353 (Gly-353) interacts with L-glutamine. The Nucleophile; for glutamine hydrolysis role is filled by Cys-380. L-glutamine-binding positions include 381 to 384 (YGMQ), Glu-404, and Arg-471. Active-site residues include His-518 and Glu-520.

This sequence belongs to the CTP synthase family. Homotetramer.

It carries out the reaction UTP + L-glutamine + ATP + H2O = CTP + L-glutamate + ADP + phosphate + 2 H(+). The enzyme catalyses L-glutamine + H2O = L-glutamate + NH4(+). It catalyses the reaction UTP + NH4(+) + ATP = CTP + ADP + phosphate + 2 H(+). Its pathway is pyrimidine metabolism; CTP biosynthesis via de novo pathway; CTP from UDP: step 2/2. Its activity is regulated as follows. Allosterically activated by GTP, when glutamine is the substrate; GTP has no effect on the reaction when ammonia is the substrate. The allosteric effector GTP functions by stabilizing the protein conformation that binds the tetrahedral intermediate(s) formed during glutamine hydrolysis. Inhibited by the product CTP, via allosteric rather than competitive inhibition. In terms of biological role, catalyzes the ATP-dependent amination of UTP to CTP with either L-glutamine or ammonia as the source of nitrogen. Regulates intracellular CTP levels through interactions with the four ribonucleotide triphosphates. The sequence is that of CTP synthase from Xanthomonas axonopodis pv. citri (strain 306).